The following is a 274-amino-acid chain: Rhamnulose-1-phosphate aldolase (274 aa).

The active site involves Glu-117. His-141, His-143, and His-212 together coordinate Zn(2+).

The protein belongs to the aldolase class II family. RhaD subfamily. Homotetramer. Zn(2+) is required as a cofactor.

It is found in the cytoplasm. It catalyses the reaction L-rhamnulose 1-phosphate = (S)-lactaldehyde + dihydroxyacetone phosphate. It functions in the pathway carbohydrate degradation; L-rhamnose degradation; glycerone phosphate from L-rhamnose: step 3/3. Its function is as follows. Catalyzes the reversible cleavage of L-rhamnulose-1-phosphate to dihydroxyacetone phosphate (DHAP) and L-lactaldehyde. This Shigella boydii serotype 4 (strain Sb227) protein is Rhamnulose-1-phosphate aldolase.